The primary structure comprises 653 residues: Poly [ADP-ribose] polymerase 2 (653 aa).

The SAP 1 domain occupies Ser2–Ile36. The tract at residues Asn64–Thr84 is disordered. A Nuclear localization signal motif is present at residues Lys69–Arg72. Positions Leu91–Thr125 constitute an SAP 2 domain. The WGR domain maps to Asn179 to Tyr276. In terms of domain architecture, PARP alpha-helical spans Glu301–Glu419. The region spanning Asp427–Arg653 is the PARP catalytic domain.

Belongs to the ARTD/PARP family.

Its subcellular location is the nucleus. The catalysed reaction is NAD(+) + (ADP-D-ribosyl)n-acceptor = nicotinamide + (ADP-D-ribosyl)n+1-acceptor + H(+).. The enzyme catalyses L-aspartyl-[protein] + NAD(+) = 4-O-(ADP-D-ribosyl)-L-aspartyl-[protein] + nicotinamide. It catalyses the reaction L-glutamyl-[protein] + NAD(+) = 5-O-(ADP-D-ribosyl)-L-glutamyl-[protein] + nicotinamide. In terms of biological role, involved in the base excision repair (BER) pathway, by catalyzing the poly(ADP-ribosyl)ation of a limited number of acceptor proteins involved in chromatin architecture and in DNA metabolism. This modification follows DNA damages and appears as an obligatory step in a detection/signaling pathway leading to the reparation of DNA strand breaks. The polypeptide is Poly [ADP-ribose] polymerase 2 (PARP2) (Zea mays (Maize)).